A 199-amino-acid chain; its full sequence is Inner membrane protein E199L (199 aa).

N-linked (GlcNAc...) asparagine; by host glycosylation is present at Asn131. A helical membrane pass occupies residues 150-170; that stretch reads INVMNHPFLTLILIILILVII.

It belongs to the asfivirus E199L family. In terms of assembly, interacts with host PYCR2; this interaction results in autophagy activation.

It is found in the virion membrane. Its subcellular location is the host membrane. Essential for viral fusion with host endosomal membrane and core release. Not required for virus morphogenesis and egress. Induces complete autophagy through the interaction with and down-regulation of host PYCR2. This is Inner membrane protein E199L from African swine fever virus (isolate Pig/Kenya/KEN-50/1950) (ASFV).